The following is a 352-amino-acid chain: Glycerol-1-phosphate dehydrogenase [NAD(P)+] (352 aa).

NAD(+)-binding positions include 91-95 (GRVID) and 113-116 (TVAS). Residue Asp118 coordinates substrate. Ser122 provides a ligand contact to NAD(+). Glu169 contributes to the substrate binding site. Residues Glu169 and His249 each coordinate Zn(2+). Substrate is bound at residue His253. His269 provides a ligand contact to Zn(2+).

It belongs to the glycerol-1-phosphate dehydrogenase family. As to quaternary structure, homodimer. The cofactor is Zn(2+).

Its subcellular location is the cytoplasm. It carries out the reaction sn-glycerol 1-phosphate + NAD(+) = dihydroxyacetone phosphate + NADH + H(+). The enzyme catalyses sn-glycerol 1-phosphate + NADP(+) = dihydroxyacetone phosphate + NADPH + H(+). The protein operates within membrane lipid metabolism; glycerophospholipid metabolism. In terms of biological role, catalyzes the NAD(P)H-dependent reduction of dihydroxyacetonephosphate (DHAP or glycerone phosphate) to glycerol 1-phosphate (G1P). The G1P thus generated is used as the glycerophosphate backbone of phospholipids in the cellular membranes of Archaea. The polypeptide is Glycerol-1-phosphate dehydrogenase [NAD(P)+] (Caldivirga maquilingensis (strain ATCC 700844 / DSM 13496 / JCM 10307 / IC-167)).